Here is a 393-residue protein sequence, read N- to C-terminus: uncharacterized protein (393 aa).

2 disordered regions span residues Asp77–Pro118 and Ile259–Asn296. Low complexity predominate over residues Asn79–Asn92. Polar residues predominate over residues Ile103–Val114. Residues Ile259–Asn289 show a composition bias toward low complexity.

This is an uncharacterized protein from Dictyostelium discoideum (Social amoeba).